A 181-amino-acid chain; its full sequence is Small ribosomal subunit protein bS16 (181 aa).

Positions 150–181 (KKAAEEAAKAAAEAPAEEAAPAEETATEAAAE) are disordered. A compositionally biased stretch (low complexity) spans 158-181 (KAAAEAPAEEAAPAEETATEAAAE).

It belongs to the bacterial ribosomal protein bS16 family.

In Bacteroides fragilis (strain YCH46), this protein is Small ribosomal subunit protein bS16.